Consider the following 173-residue polypeptide: Small ribosomal subunit protein mS25 (173 aa).

This sequence belongs to the mitochondrion-specific ribosomal protein mS25 family. In terms of assembly, component of the mitochondrial ribosome small subunit (28S) which comprises a 12S rRNA and about 30 distinct proteins.

Its subcellular location is the mitochondrion. This Bos taurus (Bovine) protein is Small ribosomal subunit protein mS25 (MRPS25).